Here is an 89-residue protein sequence, read N- to C-terminus: Small ribosomal subunit protein uS15 (89 aa).

Belongs to the universal ribosomal protein uS15 family. As to quaternary structure, part of the 30S ribosomal subunit. Forms a bridge to the 50S subunit in the 70S ribosome, contacting the 23S rRNA.

Its function is as follows. One of the primary rRNA binding proteins, it binds directly to 16S rRNA where it helps nucleate assembly of the platform of the 30S subunit by binding and bridging several RNA helices of the 16S rRNA. In terms of biological role, forms an intersubunit bridge (bridge B4) with the 23S rRNA of the 50S subunit in the ribosome. The protein is Small ribosomal subunit protein uS15 of Mesorhizobium japonicum (strain LMG 29417 / CECT 9101 / MAFF 303099) (Mesorhizobium loti (strain MAFF 303099)).